The chain runs to 411 residues: Serpin A3-3 (411 aa).

The first 24 residues, Met-1 to Cys-24, serve as a signal peptide directing secretion. N-linked (GlcNAc...) asparagine glycans are attached at residues Asn-100, Asn-180, Asn-230, Asn-264, and Asn-318.

This sequence belongs to the serpin family. In terms of assembly, homodimer.

It localises to the cytoplasmic vesicle. The protein resides in the secretory vesicle. Its subcellular location is the chromaffin granule. The protein localises to the secreted. Functionally, serine protease inhibitor. Strongly inhibits elastase and trypsin stoichiometrically at the molar ratio of 1:1. Acts as a moderate inhibitor of plasmin and chymotrypsin. Does not inhibit thrombin, urokinase, kallikrein, tissue plasminogen activator, cathepsin G or the cysteine proteases papain, cathepsin B or cathepsin L. The sequence is that of Serpin A3-3 (SERPINA3-3) from Bos taurus (Bovine).